The chain runs to 275 residues: Anamorsin homolog (275 aa).

Residues 1–147 (MTSASIHIGS…QSASSAAATG (147 aa)) are N-terminal SAM-like domain. Positions 148-183 (RINLGGAKTKVKLSLDDDDDDQLIDEDDLLNGGGGM) are linker. Residues Cys203, Cys209, Cys212, and Cys214 each coordinate [2Fe-2S] cluster. The tract at residues 203-214 (CGGRKACDNCTC) is fe-S binding site A. Cys238, Cys241, Cys249, and Cys252 together coordinate [4Fe-4S] cluster. 2 short sequence motifs (cx2C motif) span residues 238–241 (CGNC) and 249–252 (CAGC). The interval 238–252 (CGNCAKGDAFRCAGC) is fe-S binding site B.

The protein belongs to the anamorsin family. As to quaternary structure, monomer. The cofactor is [2Fe-2S] cluster. [4Fe-4S] cluster serves as cofactor.

The protein resides in the cytoplasm. It localises to the mitochondrion intermembrane space. Functionally, component of the cytosolic iron-sulfur (Fe-S) protein assembly (CIA) machinery. Required for the maturation of extramitochondrial Fe-S proteins. Part of an electron transfer chain functioning in an early step of cytosolic Fe-S biogenesis, facilitating the de novo assembly of a [4Fe-4S] cluster on the cytosolic Fe-S scaffold complex. Electrons are transferred from NADPH via a FAD- and FMN-containing diflavin oxidoreductase. Together with the diflavin oxidoreductase, also required for the assembly of the diferric tyrosyl radical cofactor of ribonucleotide reductase (RNR), probably by providing electrons for reduction during radical cofactor maturation in the catalytic small subunit. This chain is Anamorsin homolog, found in Thalassiosira pseudonana (Marine diatom).